The following is a 528-amino-acid chain: Tyrosine--tRNA ligase, cytoplasmic (528 aa).

Met-1 is subject to N-acetylmethionine. The residue at position 2 (Gly-2) is an N-acetylglycine; in Tyrosine--tRNA ligase, cytoplasmic, N-terminally processed. Tyr-39 serves as a coordination point for L-tyrosine. Tyr-39 contacts trans-resveratrol. The short motif at 44 to 52 (TTGKPHVAY) is the 'HIGH' region element. Tyr-166, Gln-170, Asp-173, and Gln-188 together coordinate L-tyrosine. 2 residues coordinate trans-resveratrol: Gln-170 and Asp-173. Lys-197 bears the N6-acetyllysine mark. Phosphoserine is present on Ser-205. At Lys-206 the chain carries N6-acetyllysine. Residues 222–226 (KMSSS) carry the 'KMSKS' region motif. Positions 242–247 (KKKLKK) match the Nuclear localization signal motif. The disordered stretch occupies residues 339–363 (AAYPDPSKQKPMAKGPAKNSEPEEV). The tRNA-binding domain occupies 364–468 (IPSRLDIRVG…AGSAPGERVF (105 aa)). Residue Ser-386 is modified to Phosphoserine. An N6-acetyllysine mark is found at Lys-474, Lys-482, and Lys-490.

The protein belongs to the class-I aminoacyl-tRNA synthetase family. In terms of assembly, homodimer. Interacts (when binding to resveratrol) with PARP1; interaction stimulates the poly-ADP-ribosyltransferase activity of PARP1.

It is found in the cytoplasm. Its subcellular location is the nucleus. It catalyses the reaction tRNA(Tyr) + L-tyrosine + ATP = L-tyrosyl-tRNA(Tyr) + AMP + diphosphate + H(+). Resveratrol strongly inhibits the tyrosine--tRNA ligase activity. Tyrosine--tRNA ligase that catalyzes the attachment of tyrosine to tRNA(Tyr) in a two-step reaction: tyrosine is first activated by ATP to form Tyr-AMP and then transferred to the acceptor end of tRNA(Tyr). Also acts as a positive regulator of poly-ADP-ribosylation in the nucleus, independently of its tyrosine--tRNA ligase activity. Activity is switched upon resveratrol-binding: resveratrol strongly inhibits the tyrosine--tRNA ligase activity and promotes relocalization to the nucleus, where YARS1 specifically stimulates the poly-ADP-ribosyltransferase activity of PARP1. In Pongo abelii (Sumatran orangutan), this protein is Tyrosine--tRNA ligase, cytoplasmic (YARS1).